The chain runs to 466 residues: Argininosuccinate lyase (466 aa).

The protein belongs to the lyase 1 family. Argininosuccinate lyase subfamily.

Its subcellular location is the cytoplasm. It catalyses the reaction 2-(N(omega)-L-arginino)succinate = fumarate + L-arginine. It participates in amino-acid biosynthesis; L-arginine biosynthesis; L-arginine from L-ornithine and carbamoyl phosphate: step 3/3. The polypeptide is Argininosuccinate lyase (Synechococcus elongatus (strain ATCC 33912 / PCC 7942 / FACHB-805) (Anacystis nidulans R2)).